The sequence spans 183 residues: Ribose 1,5-bisphosphate phosphokinase PhnN (183 aa).

6–13 contacts ATP; sequence GPSGAGKD.

The protein belongs to the ribose 1,5-bisphosphokinase family.

It catalyses the reaction alpha-D-ribose 1,5-bisphosphate + ATP = 5-phospho-alpha-D-ribose 1-diphosphate + ADP. Its pathway is metabolic intermediate biosynthesis; 5-phospho-alpha-D-ribose 1-diphosphate biosynthesis; 5-phospho-alpha-D-ribose 1-diphosphate from D-ribose 5-phosphate (route II): step 3/3. Catalyzes the phosphorylation of ribose 1,5-bisphosphate to 5-phospho-D-ribosyl alpha-1-diphosphate (PRPP). The polypeptide is Ribose 1,5-bisphosphate phosphokinase PhnN (Agrobacterium fabrum (strain C58 / ATCC 33970) (Agrobacterium tumefaciens (strain C58))).